The sequence spans 33 residues: Vejocalcin (33 aa).

Cystine bridges form between Cys3/Cys17, Cys10/Cys21, and Cys16/Cys32. The interval 23–24 (RR) is essential for stimulation of [3H]ryanodine binding to RYR1.

As to expression, expressed by the venom gland.

It is found in the secreted. Its function is as follows. This toxin stabilizes ryanodine receptor 1 (RyR1) opening in a long-lasting subconductance state (60% of the full conductance state). Furthermore, it triggers calcium release from sarcoplasmic vesicles (31 nM are enough to induce a sharp release, and 65% of the total calcium is released after toxin (100 nM) addition) probably by acting as a cell-penetrating peptide (CPP). In addition, it has been shown to dose-dependently stimulate ryanodine binding to RyR1 (EC(50)=3.7 nM). It also augments the bell-shaped calcium-[3H]ryanodine binding curve that is maximal at about 10 uM calcium concentration. It binds a different site as ryanodine. It acts synergistically with caffeine. In vivo, intracerebroventricular injection into mice induces neurotoxic symptoms, followed by death. This is Vejocalcin from Vaejovis mexicanus (Mexican scorpion).